The following is a 1023-amino-acid chain: Sodium/potassium-transporting ATPase subunit alpha-1 (1023 aa).

Positions 1-5 (MAFKV) are excised as a propeptide. Residues 1-11 (MAFKVGRDKYE) are compositionally biased toward basic and acidic residues. Residues 1-38 (MAFKVGRDKYEPAAVSEQGDKKGKKGKKDRDMDELKKE) are disordered. The Cytoplasmic segment spans residues 6-87 (GRDKYEPAAV…NALTPPPTTP (82 aa)). K9 carries the N6-acetyllysine modification. Y10 bears the Phosphotyrosine mark. S16 is modified (phosphoserine; by PKC). K21 is subject to N6-acetyllysine. The span at 28 to 38 (KDRDMDELKKE) shows a compositional bias: basic and acidic residues. Phosphoserine occurs at positions 40 and 47. The tract at residues 82 to 84 (PPP) is phosphoinositide-3 kinase binding. A helical membrane pass occupies residues 88–108 (EWIKFCRQLFGGFSMLLWIGA). The Extracellular segment spans residues 109-131 (ILCFLAYSIQAATEEEPQNDNLY). The helical transmembrane segment at 132 to 152 (LGVVLSAVVIITGCFSYYQEA) threads the bilayer. Residues 153–288 (KSSKIMESFK…GGQTPIAAEI (136 aa)) are Cytoplasmic-facing. Residues 216-235 (SSLTGESEPQTRSPDFTNEN) form a disordered region. S228 bears the Phosphoserine mark. Y260 carries the post-translational modification Phosphotyrosine. The chain crosses the membrane as a helical span at residues 289–308 (EHFIHIITGVAVFLGVSFFI). The Extracellular segment spans residues 309–320 (LSLILEYTWLEA). The chain crosses the membrane as a helical span at residues 321–338 (VIFLIGIIVANVPEGLLA). Over 339–772 (TVTVCLTLTA…EEGRLIFDNL (434 aa)) the chain is Cytoplasmic. The active-site 4-aspartylphosphate intermediate is D376. Phosphoserine is present on residues S452 and S484. An ATP-binding site is contributed by K487. Y542 is subject to Phosphotyrosine. A mediates interaction with SCN7A region spans residues 596–717 (RAAVPDAVGK…QGAIVAVTGD (122 aa)). Residue K661 is modified to N6-succinyllysine. Phosphoserine occurs at positions 668 and 675. Positions 717 and 721 each coordinate Mg(2+). Residues 773–792 (KKSIAYTLTSNIPEITPFLI) traverse the membrane as a helical segment. Topologically, residues 793-802 (FIIANIPLPL) are extracellular. Residues 803-823 (GTVTILCIDLGTDMVPAISLA) form a helical membrane-spanning segment. Topologically, residues 824–843 (YEQAESDIMKRQPRNPKTDK) are cytoplasmic. The chain crosses the membrane as a helical span at residues 844–866 (LVNERLISTAYGQIGMIQALGGF). The Extracellular portion of the chain corresponds to 867–918 (FTYFVILAENGFLPLHLLGLRVDWDDRWINDVEDSYGQQWTYEQRKIVEFTC). The helical transmembrane segment at 919–938 (HTAFFVSIVVVQWADLVICK) threads the bilayer. Residues 939–951 (TRRNSVFQQGMKN) lie on the Cytoplasmic side of the membrane. Residue S943 is modified to Phosphoserine; by PKA. The chain crosses the membrane as a helical span at residues 952–970 (KILIFGLFEETALAAFLSY). Residues 971-985 (CPGMGVALRMYPLKP) lie on the Extracellular side of the membrane. The helical transmembrane segment at 986-1006 (TWWFCAFPYSLLIFVYDEVRK) threads the bilayer. Residues 1007–1023 (LIIRRRPGGWVEKETYY) are Cytoplasmic-facing.

The protein belongs to the cation transport ATPase (P-type) (TC 3.A.3) family. Type IIC subfamily. As to quaternary structure, the sodium/potassium-transporting ATPase is composed of a catalytic alpha subunit, an auxiliary non-catalytic beta subunit and an additional regulatory subunit. Interacts with regulatory subunit FXYD1. Interacts with regulatory subunit FXYD3. Interacts with SIK1. Interacts with SLC35G1 and STIM1. Interacts with CLN3; this interaction regulates the sodium/potassium-transporting ATPase complex localization at the plasma membrane. Interacts with SCN7A; activates ATP1A1 P-type sodium:potassium-exchanging transporter activity which indirectly signals to nearby neurons to regulate sodium homeostasis. Phosphorylation on Tyr-10 modulates pumping activity. Phosphorylation of Ser-943 by PKA modulates the response of ATP1A1 to PKC. Dephosphorylation by protein phosphatase 2A (PP2A) following increases in intracellular sodium, leading to increase catalytic activity.

It localises to the cell membrane. Its subcellular location is the basolateral cell membrane. The protein resides in the sarcolemma. It is found in the cell projection. The protein localises to the axon. It localises to the melanosome. The enzyme catalyses K(+)(out) + Na(+)(in) + ATP + H2O = K(+)(in) + Na(+)(out) + ADP + phosphate + H(+). Its function is as follows. This is the catalytic component of the active enzyme, which catalyzes the hydrolysis of ATP coupled with the exchange of sodium and potassium ions across the plasma membrane. This action creates the electrochemical gradient of sodium and potassium ions, providing the energy for active transport of various nutrients. Could also be part of an osmosensory signaling pathway that senses body-fluid sodium levels and controls salt intake behavior as well as voluntary water intake to regulate sodium homeostasis. In Pongo abelii (Sumatran orangutan), this protein is Sodium/potassium-transporting ATPase subunit alpha-1 (ATP1A1).